The chain runs to 360 residues: Phospho-N-acetylmuramoyl-pentapeptide-transferase (360 aa).

Transmembrane regions (helical) follow at residues 27 to 47, 72 to 92, 94 to 114, 132 to 152, 168 to 188, 199 to 219, 236 to 256, 263 to 283, 288 to 308, and 338 to 358; these read IVSLLTALFISLWMGPRLIGW, PTMGGLMILTSITISVLMWAY, SNPYVWCVLFVLLGYGIVGFV, WKYFWQSVIALVVAFTMYCIG, IMPQLGLLYILLSYFVIVGTS, GLAIMPTVFVAAGMGLVAWAT, AGELVIVCTAIVGAGLGFLWF, VFMGDVGSLALGGALGTIAVL, FLLVIMGGVFVMETLSVILQV, and VIVRFWIISLMLVLIGLATLK.

Belongs to the glycosyltransferase 4 family. MraY subfamily. Mg(2+) serves as cofactor.

The protein localises to the cell inner membrane. The enzyme catalyses UDP-N-acetyl-alpha-D-muramoyl-L-alanyl-gamma-D-glutamyl-meso-2,6-diaminopimeloyl-D-alanyl-D-alanine + di-trans,octa-cis-undecaprenyl phosphate = di-trans,octa-cis-undecaprenyl diphospho-N-acetyl-alpha-D-muramoyl-L-alanyl-D-glutamyl-meso-2,6-diaminopimeloyl-D-alanyl-D-alanine + UMP. Its pathway is cell wall biogenesis; peptidoglycan biosynthesis. Catalyzes the initial step of the lipid cycle reactions in the biosynthesis of the cell wall peptidoglycan: transfers peptidoglycan precursor phospho-MurNAc-pentapeptide from UDP-MurNAc-pentapeptide onto the lipid carrier undecaprenyl phosphate, yielding undecaprenyl-pyrophosphoryl-MurNAc-pentapeptide, known as lipid I. The polypeptide is Phospho-N-acetylmuramoyl-pentapeptide-transferase (Edwardsiella ictaluri (strain 93-146)).